The primary structure comprises 185 residues: Ribosome-recycling factor (185 aa).

This sequence belongs to the RRF family.

The protein resides in the cytoplasm. Responsible for the release of ribosomes from messenger RNA at the termination of protein biosynthesis. May increase the efficiency of translation by recycling ribosomes from one round of translation to another. The chain is Ribosome-recycling factor from Rhodospirillum centenum (strain ATCC 51521 / SW).